The chain runs to 342 residues: MSKIIQAFNSSNRNYTPIWFMRQAGRYLPEYQMLRKTTNSFFELCYDPIKAAEVTLQPIARFDFDAAIIFSDILVLPDSLGINIRFINNLGPTAEKIPNLLDLQKLKIQNTKISKVYEAIDIVRKKLNKQKSLIGFCGGPWTVLTYILGYNSRNTPKFQEIKSNNKHELILDSINILTKHTIDHLENQILAGADIVQIFDSWAGILPYQEFSEYVIKPTSNIVKTLKEKFPHIKIIGFPKGAGKLYHKYTKETNVDGISCDYNLPLNEMLKLQKNALVQGNLNPNTILSEDSKIIEESVIKIMDTLSNNRFIFNLGHGILPETPIKNVELIVKLVKNYHSSE.

Residues 22–26 (RQAGR), Phe42, Asp72, Tyr146, Ser201, and His317 each bind substrate.

This sequence belongs to the uroporphyrinogen decarboxylase family. In terms of assembly, homodimer.

It localises to the cytoplasm. It catalyses the reaction uroporphyrinogen III + 4 H(+) = coproporphyrinogen III + 4 CO2. Its pathway is porphyrin-containing compound metabolism; protoporphyrin-IX biosynthesis; coproporphyrinogen-III from 5-aminolevulinate: step 4/4. Catalyzes the decarboxylation of four acetate groups of uroporphyrinogen-III to yield coproporphyrinogen-III. The protein is Uroporphyrinogen decarboxylase of Orientia tsutsugamushi (strain Ikeda) (Rickettsia tsutsugamushi).